A 123-amino-acid chain; its full sequence is Large ribosomal subunit protein uL14 (123 aa).

It belongs to the universal ribosomal protein uL14 family. Part of the 50S ribosomal subunit. Forms a cluster with proteins L3 and L19. In the 70S ribosome, L14 and L19 interact and together make contacts with the 16S rRNA in bridges B5 and B8.

Binds to 23S rRNA. Forms part of two intersubunit bridges in the 70S ribosome. In Koribacter versatilis (strain Ellin345), this protein is Large ribosomal subunit protein uL14.